A 154-amino-acid chain; its full sequence is D-aminoacyl-tRNA deacylase (154 aa).

Residues 142-143 (GP) carry the Gly-cisPro motif, important for rejection of L-amino acids motif.

The protein belongs to the DTD family. As to quaternary structure, homodimer.

Its subcellular location is the cytoplasm. The catalysed reaction is glycyl-tRNA(Ala) + H2O = tRNA(Ala) + glycine + H(+). It catalyses the reaction a D-aminoacyl-tRNA + H2O = a tRNA + a D-alpha-amino acid + H(+). In terms of biological role, an aminoacyl-tRNA editing enzyme that deacylates mischarged D-aminoacyl-tRNAs. Also deacylates mischarged glycyl-tRNA(Ala), protecting cells against glycine mischarging by AlaRS. Acts via tRNA-based rather than protein-based catalysis; rejects L-amino acids rather than detecting D-amino acids in the active site. By recycling D-aminoacyl-tRNA to D-amino acids and free tRNA molecules, this enzyme counteracts the toxicity associated with the formation of D-aminoacyl-tRNA entities in vivo and helps enforce protein L-homochirality. The polypeptide is D-aminoacyl-tRNA deacylase (Polaromonas naphthalenivorans (strain CJ2)).